The chain runs to 501 residues: Dipeptide and tripeptide permease B (501 aa).

Residues 1-27 are Cytoplasmic-facing; that stretch reads MRPSAPTGLLQQPKPFFMIFFVELWER. A helical transmembrane segment spans residues 28–48; it reads FGYYGVQGILAVFFVQQLGFS. Topologically, residues 49-52 are periplasmic; that stretch reads QEQS. A helical membrane pass occupies residues 53 to 73; it reads FITFGAFSALVYGLISVGGYV. Topologically, residues 74–82 are cytoplasmic; that stretch reads GDHVLGTKR. Residues 83–103 form a helical membrane-spanning segment; sequence TMVLGAIVLVIGYFMTGMSIY. Topologically, residues 104-106 are periplasmic; the sequence is NPD. The chain crosses the membrane as a helical span at residues 107–127; sequence LIFYALGTIAVGNCLFKANPA. The Cytoplasmic segment spans residues 128–146; that stretch reads SLLAKCYERGDPRLDGAFT. The helical transmembrane segment at 147 to 167 threads the bilayer; the sequence is LFYMSINIGSLISLSLAPVIA. Residues 168 to 172 lie on the Periplasmic side of the membrane; sequence DHYGY. Residues 173–193 traverse the membrane as a helical segment; sequence TVTYNLCGVGLVIALLTFFAC. Topologically, residues 194–211 are cytoplasmic; that stretch reads RHMVRDIGSEPDHLPLDY. A helical transmembrane segment spans residues 212–232; the sequence is GKLLLVLLGSVALVFFCAWLM. Residue H233 is a topological domain, periplasmic. A helical membrane pass occupies residues 234-254; sequence HVVIANMVLMTVTLAVVIFFF. Residues 255 to 267 are Cytoplasmic-facing; it reads REAFKLDAVARNK. The chain crosses the membrane as a helical span at residues 268-288; it reads MYVAFVLMLEAVVFYVLYAQM. Over 289–311 the chain is Periplasmic; the sequence is PTSLNFFAINNMHHEMLGMSVNP. The helical transmembrane segment at 312–332 threads the bilayer; that stretch reads ISFQALNPFWVVVGSPVLAMI. Over 333-350 the chain is Cytoplasmic; sequence YTRLGSKGRDLTMPLKFT. Residues 351 to 371 form a helical membrane-spanning segment; it reads LGMLFCSLGFLTAAASGIWFA. Over 372–380 the chain is Periplasmic; the sequence is DAQGLTSPW. A helical transmembrane segment spans residues 381 to 401; it reads FMVLIYLFQSLGELMISALGL. Over 402 to 411 the chain is Cytoplasmic; that stretch reads AMVAALVPQR. The helical transmembrane segment at 412–432 threads the bilayer; the sequence is LMGFILGMWFLTQAMASLLGG. The Periplasmic portion of the chain corresponds to 433 to 456; sequence YVATFTAVPQGVTDPLQTLPIYTD. Residues 457–477 traverse the membrane as a helical segment; sequence VFGKIGLVTLLVAVVMALMVP. At 478-501 the chain is on the cytoplasmic side; that stretch reads WLNRMMHAGQGEEGEDLLSQQAKA.

Belongs to the major facilitator superfamily. Proton-dependent oligopeptide transporter (POT/PTR) (TC 2.A.17) family. DtpB subfamily.

It localises to the cell inner membrane. Functionally, proton-dependent permease that transports di- and tripeptides. The polypeptide is Dipeptide and tripeptide permease B (Aeromonas hydrophila subsp. hydrophila (strain ATCC 7966 / DSM 30187 / BCRC 13018 / CCUG 14551 / JCM 1027 / KCTC 2358 / NCIMB 9240 / NCTC 8049)).